Here is a 516-residue protein sequence, read N- to C-terminus: Probable D,D-dipeptide-binding periplasmic protein DdpA (516 aa).

The signal sequence occupies residues 1–25; the sequence is MKRSISFRPTLLALVLATNFPVAHA.

Belongs to the bacterial solute-binding protein 5 family. The complex is composed of two ATP-binding proteins (DdpD and DdpF), two transmembrane proteins (DdpB and DdpC) and a solute-binding protein (DdpA).

It is found in the periplasm. Its function is as follows. Part of the ABC transporter complex DdpABCDF, which is probably involved in D,D-dipeptide transport. The protein is Probable D,D-dipeptide-binding periplasmic protein DdpA (ddpA) of Escherichia coli (strain K12).